We begin with the raw amino-acid sequence, 227 residues long: MKVSYHGHSVVKIETNGKVILIDPFLTGNPKTDLKAEDVKVDAILLSHGHGDHVGDTVELAKKNNAVVVAPFELATFLSWQGVKTHPMHIGGSHEFDFGKVKFTQAFHGSSYIDEENKTITYTGMPAGILFTAEEKTLYHAGDTALFSDMKLIGELNNIDVAFLPIGDNFTMGPEDAVLAAKWVQAKTVVPMHYNTFPVIEQDPYQFVEKLQNCTGKVLEAGESITL.

The protein belongs to the UPF0173 family.

This Bacillus cereus (strain ATCC 10987 / NRS 248) protein is UPF0173 metal-dependent hydrolase BCE_4747.